A 191-amino-acid polypeptide reads, in one-letter code: Glycerol-3-phosphate acyltransferase (191 aa).

Transmembrane regions (helical) follow at residues 7-27 (ILVL…SYIG), 51-71 (KLAV…VMLA), 80-100 (FVFM…WLSF), 115-135 (FIEY…FVIF), 139-159 (SLSS…HYSA), and 161-181 (ESIT…ENIV).

It belongs to the PlsY family. In terms of assembly, probably interacts with PlsX.

It localises to the cell inner membrane. It carries out the reaction an acyl phosphate + sn-glycerol 3-phosphate = a 1-acyl-sn-glycero-3-phosphate + phosphate. It participates in lipid metabolism; phospholipid metabolism. Functionally, catalyzes the transfer of an acyl group from acyl-phosphate (acyl-PO(4)) to glycerol-3-phosphate (G3P) to form lysophosphatidic acid (LPA). This enzyme utilizes acyl-phosphate as fatty acyl donor, but not acyl-CoA or acyl-ACP. The chain is Glycerol-3-phosphate acyltransferase from Ehrlichia canis (strain Jake).